We begin with the raw amino-acid sequence, 305 residues long: Translation initiation factor eIF2B subunit alpha (305 aa).

Lys-35 bears the N6-acetyllysine mark.

The protein belongs to the eIF-2B alpha/beta/delta subunits family. Component of the translation initiation factor 2B (eIF2B) complex which is a heterodecamer of two sets of five different subunits: alpha, beta, gamma, delta and epsilon. Subunits alpha, beta and delta comprise a regulatory subcomplex and subunits epsilon and gamma comprise a catalytic subcomplex. Within the complex, the hexameric regulatory complex resides at the center, with the two heterodimeric catalytic subcomplexes bound on opposite sides.

The protein resides in the cytoplasm. The protein localises to the cytosol. With respect to regulation, activated by the chemical integrated stress response (ISR) inhibitor ISRIB which stimulates guanine nucleotide exchange factor activity for both phosphorylated and unphosphorylated eIF2. Its function is as follows. Acts as a component of the translation initiation factor 2B (eIF2B) complex, which catalyzes the exchange of GDP for GTP on eukaryotic initiation factor 2 (eIF2) gamma subunit. Its guanine nucleotide exchange factor activity is repressed when bound to eIF2 complex phosphorylated on the alpha subunit, thereby limiting the amount of methionyl-initiator methionine tRNA available to the ribosome and consequently global translation is repressed. The protein is Translation initiation factor eIF2B subunit alpha (Eif2b1) of Mus musculus (Mouse).